The chain runs to 524 residues: MEFSLLYIHTAILGLISLFLILHFVFWRLKSAKGGSAKNSLPPEAGGAWPIIGHLHLLSGSKLLHITLGSLADKCGPAFIIRLGVRQALVVSDWELAKELFTANDVAISSRPKLLAFESMSYDFAMFGFSPYGAYWRELRKLISVELLSTRRLELLKHIRVSETEISVKELYNLWKDKKNGSGHVLVEMKQWFGDLNLNVILRMVAGKRYFGTIDAKDQEEARRCQKAMSGFFHFTGLFLVADGFPFLRWMDLGGYEKKIKASAKEMDLIAEEWLQEHRRKRESGDVASEQDFMDLMLSLLEDVDLPGYDPDTITKATCINLILGGADTNTVMLTWTLSLLMNHPHILRKAQEELDIQVGKERRVNESDIANLEYLHAIVKETLRLYPASRLGGPREFSEDCTLGGYHVTKGTSLILNLWKLQRDPRIWSNPSEFRPERFLTTHKDLDVKGRYFELIPFGAGRRSCPGTAFGLQMLPFVLANLLHAFDISTDEKTDMTESPGLTTSKATPLDVLISPRLSPNLY.

Residues 6-26 (LYIHTAILGLISLFLILHFVF) form a helical membrane-spanning segment. Residue C466 coordinates heme.

Belongs to the cytochrome P450 family. The cofactor is heme.

It localises to the membrane. The catalysed reaction is strychnine + reduced [NADPH--hemoprotein reductase] + O2 = 10-hydroxystrychnine + oxidized [NADPH--hemoprotein reductase] + H2O + H(+). It participates in alkaloid biosynthesis. Monooxygenase involved in the biosynthesis of curare monoterpene indole alkaloids (MIAs), natural products such as strychnine, a neurotoxic compound used as a pesticide to control rodents, and its pharmacologically active derivatives, including brucine, used to regulate blood pressure. Curare alkaloids act as animal glycine receptor antagonists. Catalyzes the conversion of strychnine to 10-OH strychnine. This chain is Strychnine-10-hydroxylase, found in Strychnos nux-vomica (Poison nut).